A 183-amino-acid chain; its full sequence is Bifunctional protein PyrR (183 aa).

A PRPP-binding motif is present at residues 102–114 (VVLVDDVLYTGRT).

This sequence belongs to the purine/pyrimidine phosphoribosyltransferase family. PyrR subfamily. As to quaternary structure, homodimer and homohexamer; in equilibrium.

The enzyme catalyses UMP + diphosphate = 5-phospho-alpha-D-ribose 1-diphosphate + uracil. Its function is as follows. Regulates transcriptional attenuation of the pyrimidine nucleotide (pyr) operon by binding in a uridine-dependent manner to specific sites on pyr mRNA. This disrupts an antiterminator hairpin in the RNA and favors formation of a downstream transcription terminator, leading to a reduced expression of downstream genes. In terms of biological role, also displays a weak uracil phosphoribosyltransferase activity which is not physiologically significant. This is Bifunctional protein PyrR from Listeria welshimeri serovar 6b (strain ATCC 35897 / DSM 20650 / CCUG 15529 / CIP 8149 / NCTC 11857 / SLCC 5334 / V8).